Here is a 461-residue protein sequence, read N- to C-terminus: MATSNLRRHLSASRLRLNRFISTSSSYHSHRRVVVTGLGMVTPLGRGVETTWRRLIDGECGIRGLTLDDLKMKSFDEETKLYTFDQLSSKVAAFVPYGSNPGEFDEALWLNSKAVANFIGYAVCAADEALRDAEWLPTEEEEKERTGVSIGGGIGSICDIVEAAQLICEKRLRRLSPFFIPKILVNMASGHVSMKYGFQGPNHAAVTACATGAHSIGDATRMIQFGDADVMVAGGTESSIDALSVAGFSRSRALSTKFNSSPQEASRPFDCDRDGFVIGEGSGVIVLEEYEHAKRRGAKIYAELCGYGMSGDAHHITQPPEDGKGAVLAMTRALRQSGLCPNQIDYVNAHATSTPIGDAVEARAIKTVFSEHATSGTLAFSSTKGATGHLLGAAGAVEAIFSILAIHHGVAPMTLNVKNPDPIFDKRFMPLTTSKKMLVRTAMSNSFGFGGTNASLLFASI.

Residues 1 to 28 (MATSNLRRHLSASRLRLNRFISTSSSYH) constitute a mitochondrion transit peptide. Positions 30 to 460 (HRRVVVTGLG…GTNASLLFAS (431 aa)) constitute a Ketosynthase family 3 (KS3) domain. Residues cysteine 209, histidine 350, and histidine 389 each act as for beta-ketoacyl synthase activity in the active site.

Belongs to the thiolase-like superfamily. Beta-ketoacyl-ACP synthases family. As to quaternary structure, homodimer. In terms of tissue distribution, expressed at the same level in leaves, roots, siliques and flowers.

The protein resides in the mitochondrion. It catalyses the reaction a fatty acyl-[ACP] + malonyl-[ACP] + H(+) = a 3-oxoacyl-[ACP] + holo-[ACP] + CO2. The enzyme catalyses butanoyl-[ACP] + malonyl-[ACP] + H(+) = 3-oxohexanoyl-[ACP] + holo-[ACP] + CO2. The catalysed reaction is hexanoyl-[ACP] + malonyl-[ACP] + H(+) = 3-oxooctanoyl-[ACP] + holo-[ACP] + CO2. It carries out the reaction octanoyl-[ACP] + malonyl-[ACP] + H(+) = 3-oxodecanoyl-[ACP] + holo-[ACP] + CO2. It catalyses the reaction decanoyl-[ACP] + malonyl-[ACP] + H(+) = 3-oxododecanoyl-[ACP] + holo-[ACP] + CO2. The enzyme catalyses dodecanoyl-[ACP] + malonyl-[ACP] + H(+) = 3-oxotetradecanoyl-[ACP] + holo-[ACP] + CO2. The catalysed reaction is tetradecanoyl-[ACP] + malonyl-[ACP] + H(+) = 3-oxohexadecanoyl-[ACP] + holo-[ACP] + CO2. It carries out the reaction hexadecanoyl-[ACP] + malonyl-[ACP] + H(+) = 3-oxooctadecanoyl-[ACP] + holo-[ACP] + CO2. It participates in lipid metabolism; fatty acid biosynthesis. Its activity is regulated as follows. Inhibited by cerulenin. Catalyzes all the condensation reaction of fatty acid synthesis by the addition to an acyl acceptor of two carbons from malonyl-ACP. Able to elongate saturated acyl chains from 4 to at least 16 carbons. Uses malonyl-CoA but not acetyl-CoA as primer substrate. When expressed in a heterologous system, reveals a bimodal distribution of products, with peaks at C8 and C14-C16. The major product of the reaction (octanoyl-ACP) is required for the lipoylation of essential mitochondrial proteins. Required for mitochondrial fatty acid synthesis (mtFAS). MtFAS are essential for photorespiration and plant development, probably by influencing mitochondrial membrane lipid composition and other lipid metabolic pathways. The sequence is that of 3-oxoacyl-[acyl-carrier-protein] synthase, mitochondrial from Arabidopsis thaliana (Mouse-ear cress).